A 156-amino-acid chain; its full sequence is Ribosomal RNA large subunit methyltransferase H (156 aa).

Residues Leu-72, Gly-104, and 123-128 (FGAMVW) contribute to the S-adenosyl-L-methionine site.

This sequence belongs to the RNA methyltransferase RlmH family. In terms of assembly, homodimer.

The protein resides in the cytoplasm. It carries out the reaction pseudouridine(1915) in 23S rRNA + S-adenosyl-L-methionine = N(3)-methylpseudouridine(1915) in 23S rRNA + S-adenosyl-L-homocysteine + H(+). Specifically methylates the pseudouridine at position 1915 (m3Psi1915) in 23S rRNA. In Ruegeria pomeroyi (strain ATCC 700808 / DSM 15171 / DSS-3) (Silicibacter pomeroyi), this protein is Ribosomal RNA large subunit methyltransferase H.